We begin with the raw amino-acid sequence, 213 residues long: Maleylacetoacetate isomerase (213 aa).

Residues 3–84 (NETVLYDYWR…YLAETRDGTG (82 aa)) form the GST N-terminal domain. Residues 89 to 213 (HPIDRQRVRA…QRAHPDRAKP (125 aa)) enclose the GST C-terminal domain.

Belongs to the GST superfamily. Zeta family.

The enzyme catalyses 4-maleylacetoacetate = 4-fumarylacetoacetate. It functions in the pathway amino-acid degradation; L-phenylalanine degradation; acetoacetate and fumarate from L-phenylalanine: step 5/6. The sequence is that of Maleylacetoacetate isomerase (maiA) from Rhizobium meliloti (strain 1021) (Ensifer meliloti).